Reading from the N-terminus, the 304-residue chain is Sulfate adenylyltransferase subunit 2 (304 aa).

The protein belongs to the PAPS reductase family. CysD subfamily. Heterodimer composed of CysD, the smaller subunit, and CysN.

It carries out the reaction sulfate + ATP + H(+) = adenosine 5'-phosphosulfate + diphosphate. Its pathway is sulfur metabolism; hydrogen sulfide biosynthesis; sulfite from sulfate: step 1/3. Functionally, with CysN forms the ATP sulfurylase (ATPS) that catalyzes the adenylation of sulfate producing adenosine 5'-phosphosulfate (APS) and diphosphate, the first enzymatic step in sulfur assimilation pathway. APS synthesis involves the formation of a high-energy phosphoric-sulfuric acid anhydride bond driven by GTP hydrolysis by CysN coupled to ATP hydrolysis by CysD. This is Sulfate adenylyltransferase subunit 2 from Acinetobacter baylyi (strain ATCC 33305 / BD413 / ADP1).